We begin with the raw amino-acid sequence, 187 residues long: RNA pyrophosphohydrolase (187 aa).

A Nudix hydrolase domain is found at 6–149 (GYRANVGIIL…KRQVYRLALT (144 aa)). The Nudix box signature appears at 38-59 (GGIKSGETPTQAMYRELAEETG).

This sequence belongs to the Nudix hydrolase family. RppH subfamily. A divalent metal cation serves as cofactor.

Functionally, accelerates the degradation of transcripts by removing pyrophosphate from the 5'-end of triphosphorylated RNA, leading to a more labile monophosphorylated state that can stimulate subsequent ribonuclease cleavage. The sequence is that of RNA pyrophosphohydrolase from Nitrosomonas eutropha (strain DSM 101675 / C91 / Nm57).